The sequence spans 244 residues: Isoprenyl transferase (244 aa).

Aspartate 20 is an active-site residue. Residue aspartate 20 participates in Mg(2+) binding. Substrate-binding positions include 21–24 (GNGR), tryptophan 25, arginine 33, histidine 37, and 65–67 (SSE). Asparagine 68 functions as the Proton acceptor in the catalytic mechanism. Residues tryptophan 69, arginine 71, arginine 188, and 194-196 (RIS) contribute to the substrate site. Position 207 (glutamate 207) interacts with Mg(2+).

This sequence belongs to the UPP synthase family. Homodimer. Requires Mg(2+) as cofactor.

Functionally, catalyzes the condensation of isopentenyl diphosphate (IPP) with allylic pyrophosphates generating different type of terpenoids. The polypeptide is Isoprenyl transferase (Rhodopirellula baltica (strain DSM 10527 / NCIMB 13988 / SH1)).